The primary structure comprises 412 residues: Ornithine cyclodeaminase (412 aa).

NAD(+) contacts are provided by asparagine 237, alanine 238, aspartate 316, threonine 348, methionine 349, leucine 350, histidine 351, aspartate 369, aspartate 392, and valine 393.

The protein belongs to the AgrE/ArgZ ornithine cyclodeaminase family. The cofactor is NAD(+).

The catalysed reaction is L-ornithine = L-proline + NH4(+). Functionally, catalyzes the conversion of ornithine to proline, with the release of ammonia. The polypeptide is Ornithine cyclodeaminase (Methanopyrus kandleri (strain AV19 / DSM 6324 / JCM 9639 / NBRC 100938)).